Consider the following 193-residue polypeptide: Peptidyl-tRNA hydrolase (193 aa).

Tyr17 contributes to the tRNA binding site. The active-site Proton acceptor is His22. Tyr69, Asn71, and Asn117 together coordinate tRNA.

This sequence belongs to the PTH family. As to quaternary structure, monomer.

The protein resides in the cytoplasm. The enzyme catalyses an N-acyl-L-alpha-aminoacyl-tRNA + H2O = an N-acyl-L-amino acid + a tRNA + H(+). In terms of biological role, hydrolyzes ribosome-free peptidyl-tRNAs (with 1 or more amino acids incorporated), which drop off the ribosome during protein synthesis, or as a result of ribosome stalling. Functionally, catalyzes the release of premature peptidyl moieties from peptidyl-tRNA molecules trapped in stalled 50S ribosomal subunits, and thus maintains levels of free tRNAs and 50S ribosomes. This chain is Peptidyl-tRNA hydrolase, found in Leifsonia xyli subsp. xyli (strain CTCB07).